The following is a 291-amino-acid chain: ATP synthase gamma chain (291 aa).

This sequence belongs to the ATPase gamma chain family. As to quaternary structure, F-type ATPases have 2 components, CF(1) - the catalytic core - and CF(0) - the membrane proton channel. CF(1) has five subunits: alpha(3), beta(3), gamma(1), delta(1), epsilon(1). CF(0) has three main subunits: a, b and c.

Its subcellular location is the cell membrane. Produces ATP from ADP in the presence of a proton gradient across the membrane. The gamma chain is believed to be important in regulating ATPase activity and the flow of protons through the CF(0) complex. In Streptococcus equinus (Streptococcus bovis), this protein is ATP synthase gamma chain.